Reading from the N-terminus, the 569-residue chain is Santalene synthase (569 aa).

4 residues coordinate (2E)-geranyl diphosphate: Arg-284, Asp-321, Asp-325, and Arg-460. Residues Asp-321 and Asp-325 each coordinate Mg(2+). The short motif at Asp-321–Asp-325 is the DDXXD motif element. Positions 463, 467, and 471 each coordinate Mg(2+).

This sequence belongs to the terpene synthase family. Tpsb subfamily. The cofactor is Mg(2+). Requires Mn(2+) as cofactor.

It catalyses the reaction (2E,6E)-farnesyl diphosphate = (1S,5S,6R)-alpha-bergamotene + diphosphate. The enzyme catalyses (2E,6E)-farnesyl diphosphate = (+)-alpha-santalene + diphosphate. It carries out the reaction (2E,6E)-farnesyl diphosphate = (-)-beta-santalene + diphosphate. Catalyzes a mixture of sesquiterpenoids from (2E,6E)-farnesyl diphosphate in fragrance biosynthesis. Catalyzes the formation of alpha-santalene, beta-santalene, epi-beta-santalene and exo-alpha-bergamotene, as well as traces of alpha-farnesene and beta-farnesene. The chain is Santalene synthase from Santalum austrocaledonicum (Sandalwood).